Here is a 166-residue protein sequence, read N- to C-terminus: Lipoprotein signal peptidase (166 aa).

3 helical membrane passes run 12-32, 70-90, and 102-122; these read WLWL…LILQ, WFFA…MYRS, and ALII…GFVV. Residues Asp123 and Asp141 contribute to the active site. A helical transmembrane segment spans residues 137-157; it reads FNLADTAICIGAALIVLEGFL.

This sequence belongs to the peptidase A8 family.

Its subcellular location is the cell inner membrane. It catalyses the reaction Release of signal peptides from bacterial membrane prolipoproteins. Hydrolyzes -Xaa-Yaa-Zaa-|-(S,diacylglyceryl)Cys-, in which Xaa is hydrophobic (preferably Leu), and Yaa (Ala or Ser) and Zaa (Gly or Ala) have small, neutral side chains.. The protein operates within protein modification; lipoprotein biosynthesis (signal peptide cleavage). Its function is as follows. This protein specifically catalyzes the removal of signal peptides from prolipoproteins. The polypeptide is Lipoprotein signal peptidase (Salmonella paratyphi A (strain ATCC 9150 / SARB42)).